The chain runs to 143 residues: Large ribosomal subunit protein uL13 (143 aa).

The protein belongs to the universal ribosomal protein uL13 family. As to quaternary structure, part of the 50S ribosomal subunit.

Its function is as follows. This protein is one of the early assembly proteins of the 50S ribosomal subunit, although it is not seen to bind rRNA by itself. It is important during the early stages of 50S assembly. The protein is Large ribosomal subunit protein uL13 of Clostridioides difficile (strain 630) (Peptoclostridium difficile).